The chain runs to 81 residues: Photosystem I iron-sulfur center (81 aa).

4Fe-4S ferredoxin-type domains lie at 2-31 (AHSVKIYDTCIGCTQCVRACPTDVLEMVPW) and 39-68 (IASAPRTEDCVGCKRCESACPTDFLSVRVY). 8 residues coordinate [4Fe-4S] cluster: cysteine 11, cysteine 14, cysteine 17, cysteine 21, cysteine 48, cysteine 51, cysteine 54, and cysteine 58.

In terms of assembly, the eukaryotic PSI reaction center is composed of at least 11 subunits. [4Fe-4S] cluster is required as a cofactor.

Its subcellular location is the plastid. It is found in the chloroplast thylakoid membrane. It carries out the reaction reduced [plastocyanin] + hnu + oxidized [2Fe-2S]-[ferredoxin] = oxidized [plastocyanin] + reduced [2Fe-2S]-[ferredoxin]. Its function is as follows. Apoprotein for the two 4Fe-4S centers FA and FB of photosystem I (PSI); essential for photochemical activity. FB is the terminal electron acceptor of PSI, donating electrons to ferredoxin. The C-terminus interacts with PsaA/B/D and helps assemble the protein into the PSI complex. Required for binding of PsaD and PsaE to PSI. PSI is a plastocyanin-ferredoxin oxidoreductase, converting photonic excitation into a charge separation, which transfers an electron from the donor P700 chlorophyll pair to the spectroscopically characterized acceptors A0, A1, FX, FA and FB in turn. In Chlorokybus atmophyticus (Soil alga), this protein is Photosystem I iron-sulfur center.